The chain runs to 286 residues: uncharacterized protein (286 aa).

4 disordered regions span residues 1 to 38 (MSQK…EDDV), 108 to 146 (HTGE…RRHK), 196 to 227 (RTQK…KTRL), and 241 to 286 (DVDD…PRSS). Positions 18-29 (SSSKQVLSSTSS) are enriched in low complexity. Residues 243–268 (DDQKKDGSGEEKKEKKSAEKEKKISH) show a composition bias toward basic and acidic residues. Residues 269-278 (ENVQSLSPSS) are compositionally biased toward polar residues.

This is an uncharacterized protein from Caenorhabditis elegans.